The primary structure comprises 254 residues: Large ribosomal subunit protein uL4 (254 aa).

It belongs to the universal ribosomal protein uL4 family. As to quaternary structure, part of the 50S ribosomal subunit.

Its function is as follows. One of the primary rRNA binding proteins, this protein initially binds near the 5'-end of the 23S rRNA. It is important during the early stages of 50S assembly. It makes multiple contacts with different domains of the 23S rRNA in the assembled 50S subunit and ribosome. Functionally, forms part of the polypeptide exit tunnel. The sequence is that of Large ribosomal subunit protein uL4 from Methanothermobacter thermautotrophicus (strain ATCC 29096 / DSM 1053 / JCM 10044 / NBRC 100330 / Delta H) (Methanobacterium thermoautotrophicum).